The chain runs to 557 residues: Potassium-transporting ATPase potassium-binding subunit (557 aa).

Transmembrane regions (helical) follow at residues I6–L26, A59–F79, A127–L147, L172–V192, I247–Y267, W278–F298, I363–V383, I410–V430, V475–I495, and F520–L540.

Belongs to the KdpA family. In terms of assembly, the system is composed of three essential subunits: KdpA, KdpB and KdpC.

The protein resides in the cell inner membrane. Functionally, part of the high-affinity ATP-driven potassium transport (or Kdp) system, which catalyzes the hydrolysis of ATP coupled with the electrogenic transport of potassium into the cytoplasm. This subunit binds the periplasmic potassium ions and delivers the ions to the membrane domain of KdpB through an intramembrane tunnel. This is Potassium-transporting ATPase potassium-binding subunit from Leptospira interrogans serogroup Icterohaemorrhagiae serovar Lai (strain 56601).